Reading from the N-terminus, the 331-residue chain is MQNEHSEFAKMSQTLTNVQELRLRASTTRHALSDIVREKDWSDFQFAPIREATVSRAMTTRYFEDLYRYAVSDVVIVGAGSSGLSAAYVLAKNRPDLRIAIIEANVAPGGGAWLGGQLFSAMIMRKPTHLFLDELEIPYEDEGDYVVVKHAALFTSTVLSKVLQFPNVKLFNATAVEDLVTKPSANGGVTIAGVVTNWTLVTMAHDVQSCMDPNVIELEGYKDDGTRDPKKKHGVVLSTTGHDGPFGAFCAKRLAALDAQHAIKGMQSLDMNTAEAGVVKESGATAGVEYMYFAGMETATKKGVSRMGPTFGAMAVSGIKAAEEILRHFAE.

Substrate contacts are provided by residues Ser-82, 103 to 104 (EA), Gly-111, and Val-176. Cys-210 carries the post-translational modification 2,3-didehydroalanine (Cys). Substrate is bound by residues Asp-212, His-242, Met-296, and 306 to 308 (RMG).

This sequence belongs to the THI4 family. In terms of assembly, homooctamer. It depends on Fe cation as a cofactor. In terms of processing, during the catalytic reaction, a sulfide is transferred from Cys-210 to a reaction intermediate, generating a dehydroalanine residue.

It is found in the cytoplasm. Its subcellular location is the nucleus. The enzyme catalyses [ADP-thiazole synthase]-L-cysteine + glycine + NAD(+) = [ADP-thiazole synthase]-dehydroalanine + ADP-5-ethyl-4-methylthiazole-2-carboxylate + nicotinamide + 3 H2O + 2 H(+). In terms of biological role, involved in biosynthesis of the thiamine precursor thiazole. Catalyzes the conversion of NAD and glycine to adenosine diphosphate 5-(2-hydroxyethyl)-4-methylthiazole-2-carboxylic acid (ADT), an adenylated thiazole intermediate. The reaction includes an iron-dependent sulfide transfer from a conserved cysteine residue of the protein to a thiazole intermediate. The enzyme can only undergo a single turnover, which suggests it is a suicide enzyme. May have additional roles in adaptation to various stress conditions and in DNA damage tolerance. The polypeptide is Thiamine thiazole synthase (Eremothecium gossypii (strain ATCC 10895 / CBS 109.51 / FGSC 9923 / NRRL Y-1056) (Yeast)).